The chain runs to 1379 residues: MAERANLVFHNKVIDGTAIKRLISRLIDHFGMAYTSHILDQVKTLGFQQATATSISLGIDDLLTIPSKGWLVQDAEQQSWILEKHHHYGNVHAVEKLRQSIEIWYATSEYLRQEMNPNFRMTDPFNPVHMMSFSGARGNASQVHQLVGMRGLMSDPQGQMIDLPIQSNLREGLSLTEYIISCYGARKGVVDTAVRTSDAGYLTRRLVEVVQHIVVRRTDCGTIRGISVSPRNKNRMMSERIFIQTLIGRVLADDIYIGSRCVAFRNQDLGIGLVNRLITFGTQSISIRTPFTCRSTSWICRLCYGRSPTHGDLVELGEAVGIIAGQSIGEPGTQLTLRTFHTGGVFTGGTAEHVRAPYNGKIKFNEDLVHPTRTRHGHPAFLCYIDLSVIIESEDIIHSVTIPPKSFLLVQNDQYVESEQVIAEIREGTYTFHFKERVRKYIYSDSEGEMHWSTDVSHAPEFTYSNVHLLPKTSHLWILSGGSCGSSLILFSIHKDQDQMNIPFLSAERKSISSLSVNNDQTSQKFFSSDFADKKKLGISYYSELNGNLGTSHYNFIYSAIFQENSDLLAKRRRNRFLIPFQSIQEQEKEFIPHSGISVEIPINGIFRRNSIFAFFDDPRYRRKSSGILKYGALKADSIIQKEDMIEYRGVQKFKTKYEMKVDRFFFIPEEVHILPESSAIMVQNYSIIGVDTRLTLNIRSQVGGLIRVERKKKRVELKIFSGDIHFPDKTDKISRHSGILIPPGRGKTNSKESKKFKNWIYVQRITPTKKKFFVLVRPVATYEIADSINLATLFPQDLFREKDNIQLRVFNYILYGNGKPTRGIADTSIQLVRTCLVLNWDQDNKNSALEAVRAFFVEVSTKGLIRDFIRIGLVKSHISYIRKRKNSPDSGFISADHMNPFYPISPKAGILQQSLRQNRGTIRMFLNRNKESQSLLILSSSNCFRMGPFNHVKYHNVINQSIKKNTLITIKNSSGPLGTATQISNFYSFLPLLTYNQISLIKYLQLDNFKYIFQVINSYLIDENGRIFNLDPYSNVVLNPFKLNWYFLHQNYHHNYCEETSTIISLGQFFCENVCIAKKEPHLKSGQVLIVQRDSVVIRSAKPYLATPGAKVHGHYREILYEGDTLVTFIYEKSRSGDITQGLPKVEQVLEVRSIDSISLNLEKRIKGWNKCITRILGIPWGFLIGAELTIVQSRISLVNKIQKVYRSQGVQIHNRHIEIIVRQITSKVLVSEEGMSNVFLPGELIGLLRAERTGRALEEAICYRAVLLGITRASLNTQSFISEASFQETARVLAKAALRGRIDWLKGLKENVVLGGVIPAGTGFNKGLVHCSRQHTNILLEKKTKNLALFEGDMRDILFYHREFCESSISKSDFSRI.

The Zn(2+) site is built by Cys220, Cys293, Cys300, and Cys303.

Belongs to the RNA polymerase beta' chain family. RpoC2 subfamily. In terms of assembly, in plastids the minimal PEP RNA polymerase catalytic core is composed of four subunits: alpha, beta, beta', and beta''. When a (nuclear-encoded) sigma factor is associated with the core the holoenzyme is formed, which can initiate transcription. Zn(2+) serves as cofactor.

It localises to the plastid. The protein resides in the chloroplast. The catalysed reaction is RNA(n) + a ribonucleoside 5'-triphosphate = RNA(n+1) + diphosphate. DNA-dependent RNA polymerase catalyzes the transcription of DNA into RNA using the four ribonucleoside triphosphates as substrates. The protein is DNA-directed RNA polymerase subunit beta'' of Capsella bursa-pastoris (Shepherd's purse).